The chain runs to 471 residues: Citrate synthase, mitochondrial (471 aa).

Residues 1–18 (MASLRSATALSRLRSRAG) constitute a mitochondrion transit peptide. Residues His-307, His-353, and Asp-408 contribute to the active site.

The protein belongs to the citrate synthase family. Homodimer.

It localises to the mitochondrion matrix. The catalysed reaction is oxaloacetate + acetyl-CoA + H2O = citrate + CoA + H(+). Its pathway is carbohydrate metabolism; tricarboxylic acid cycle; isocitrate from oxaloacetate: step 1/2. This is Citrate synthase, mitochondrial (CIT) from Citrus maxima (Pomelo).